A 101-amino-acid polypeptide reads, in one-letter code: MAKISMINRDLKRKRLAKKFADKRLSLKKVISSDASSYEEKIEASCKLQKLPRDSSPTRLRNRCEISGRPRGVYCKFGLGRNKLREAAMRGDVPGLRKASW.

The protein belongs to the universal ribosomal protein uS14 family. In terms of assembly, part of the 30S ribosomal subunit. Contacts proteins S3 and S10.

In terms of biological role, binds 16S rRNA, required for the assembly of 30S particles and may also be responsible for determining the conformation of the 16S rRNA at the A site. In Xylella fastidiosa (strain 9a5c), this protein is Small ribosomal subunit protein uS14.